The sequence spans 139 residues: Ribulose bisphosphate carboxylase small subunit (139 aa).

It belongs to the RuBisCO small chain family. As to quaternary structure, heterohexadecamer of 8 large and 8 small subunits.

It is found in the plastid. The protein localises to the chloroplast. Its function is as follows. RuBisCO catalyzes two reactions: the carboxylation of D-ribulose 1,5-bisphosphate, the primary event in carbon dioxide fixation, as well as the oxidative fragmentation of the pentose substrate in the photorespiration process. Both reactions occur simultaneously and in competition at the same active site. Although the small subunit is not catalytic it is essential for maximal activity. This is Ribulose bisphosphate carboxylase small subunit from Detonula confervacea (Marine diatom).